The following is a 539-amino-acid chain: Carotene epsilon-monooxygenase, chloroplastic (539 aa).

Residues 1 to 36 (MESSLFSPSSSSYSSLFTAKPTRLLSPKPKFTFSIR) constitute a chloroplast transit peptide. Residue Cys-487 coordinates heme.

It belongs to the cytochrome P450 family. Requires heme as cofactor.

The protein localises to the plastid. Its subcellular location is the chloroplast. The enzyme catalyses alpha-carotene + reduced [NADPH--hemoprotein reductase] + O2 = alpha-cryptoxanthin + oxidized [NADPH--hemoprotein reductase] + H2O + H(+). It carries out the reaction zeinoxanthin + reduced [NADPH--hemoprotein reductase] + O2 = lutein + oxidized [NADPH--hemoprotein reductase] + H2O + H(+). Functionally, heme-containing cytochrome P450 involved in the biosynthesis of xanthophylls. Specific for epsilon- and beta-ring hydroxylation of alpha-carotene. Has only a low activity toward the beta-rings of beta-carotene. The preferred substrate in planta is not alpha-carotene but the epsilon-ring of zeinoxanthin. Possesses a major beta-carotene hydroxylase activity in planta when depleted in its preferred substrate alpha-carotene. This Arabidopsis thaliana (Mouse-ear cress) protein is Carotene epsilon-monooxygenase, chloroplastic (CYP97C1).